The chain runs to 76 residues: U-scoloptoxin(15)-Ssd3b (76 aa).

An N-terminal signal peptide occupies residues 1 to 23 (MEKKIIFLCFLVALLTFPEFISS).

Contains 2 disulfide bonds. Expressed by the venom gland.

The protein resides in the secreted. The chain is U-scoloptoxin(15)-Ssd3b from Scolopendra dehaani (Thai centipede).